Consider the following 459-residue polypeptide: MLKIYNTLKREKEEFKPIHPDHVGMYVCGVTVYDLCHFGHGRTFVSFDVIARYLRYLGYNLRYVRNITDVDDKIIKRSLENNETCDQLVDRMIIEMHKDFDALNILRPDVEPRATQHIPEIIAIVEKLLAKGHAYVAEDGDVMFNVESFQKYGALSRQNLEQLQAGARVEIKSVKRNPMDFVLWKMSKENEPSWDSPWGKGRPGWHIECSAMNSKELGNHFDIHGGGSDLMFPHHENEIAQSCCAHGDDYVNYWLHTGMLTINEEKMSKSLNNFFTIRDILNKYDCESVRYFFLTAQYRSLLDYSEENIGLARKALERLYTALRGCDWNVELVENDQYVTAFKESMDDDFNTPGALAVLFELAREVNKLKAENQAEANKLAARLKQLAGVLGLLEQDPETFLQGDANNDEVAEIEAFIKQRNEARASKNWAVADEARNKLTAMGIVLEDGANGTTWRRA.

Cysteine 28 lines the Zn(2+) pocket. The 'HIGH' region motif lies at 30–40 (VTVYDLCHFGH). Residues cysteine 209, histidine 234, and glutamate 238 each contribute to the Zn(2+) site. A 'KMSKS' region motif is present at residues 266 to 270 (KMSKS). Lysine 269 lines the ATP pocket.

It belongs to the class-I aminoacyl-tRNA synthetase family. As to quaternary structure, monomer. Requires Zn(2+) as cofactor.

The protein resides in the cytoplasm. The enzyme catalyses tRNA(Cys) + L-cysteine + ATP = L-cysteinyl-tRNA(Cys) + AMP + diphosphate. The protein is Cysteine--tRNA ligase of Glaesserella parasuis serovar 5 (strain SH0165) (Haemophilus parasuis).